The following is an 83-amino-acid chain: UPF0298 protein SERP0712 (83 aa).

It belongs to the UPF0298 family.

It localises to the cytoplasm. This Staphylococcus epidermidis (strain ATCC 35984 / DSM 28319 / BCRC 17069 / CCUG 31568 / BM 3577 / RP62A) protein is UPF0298 protein SERP0712.